The sequence spans 207 residues: High frequency lysogenization protein HflD homolog (207 aa).

Belongs to the HflD family.

The protein resides in the cytoplasm. Its subcellular location is the cell inner membrane. This is High frequency lysogenization protein HflD homolog from Pseudomonas fluorescens (strain SBW25).